Reading from the N-terminus, the 213-residue chain is UPF0301 protein Aave_0907 (213 aa).

A disordered region spans residues 93-120 (MGPSSGKQAAGEGGAQAEGEGAEESAYA).

This sequence belongs to the UPF0301 (AlgH) family.

This is UPF0301 protein Aave_0907 from Paracidovorax citrulli (strain AAC00-1) (Acidovorax citrulli).